The sequence spans 144 residues: Large ribosomal subunit protein uL15 (144 aa).

Positions 1–51 are disordered; it reads MQLNTLSPAQGEKKSRKRVGRGIGSGIGKTCGSGHKGQKSRSGGFNKIGFE. The segment covering 21 to 35 has biased composition (gly residues); the sequence is RGIGSGIGKTCGSGH.

The protein belongs to the universal ribosomal protein uL15 family. Part of the 50S ribosomal subunit.

Binds to the 23S rRNA. This is Large ribosomal subunit protein uL15 from Vesicomyosocius okutanii subsp. Calyptogena okutanii (strain HA).